Here is a 183-residue protein sequence, read N- to C-terminus: ATP-dependent protease subunit HslV (183 aa).

The active site involves T13. Na(+)-binding residues include G168, C171, and T174.

Belongs to the peptidase T1B family. HslV subfamily. A double ring-shaped homohexamer of HslV is capped on each side by a ring-shaped HslU homohexamer. The assembly of the HslU/HslV complex is dependent on binding of ATP.

The protein localises to the cytoplasm. The enzyme catalyses ATP-dependent cleavage of peptide bonds with broad specificity.. With respect to regulation, allosterically activated by HslU binding. In terms of biological role, protease subunit of a proteasome-like degradation complex believed to be a general protein degrading machinery. The protein is ATP-dependent protease subunit HslV of Xylella fastidiosa (strain M23).